The sequence spans 255 residues: Imidazole glycerol phosphate synthase subunit HisF (255 aa).

Active-site residues include Asp11 and Asp130.

This sequence belongs to the HisA/HisF family. In terms of assembly, heterodimer of HisH and HisF.

Its subcellular location is the cytoplasm. It carries out the reaction 5-[(5-phospho-1-deoxy-D-ribulos-1-ylimino)methylamino]-1-(5-phospho-beta-D-ribosyl)imidazole-4-carboxamide + L-glutamine = D-erythro-1-(imidazol-4-yl)glycerol 3-phosphate + 5-amino-1-(5-phospho-beta-D-ribosyl)imidazole-4-carboxamide + L-glutamate + H(+). Its pathway is amino-acid biosynthesis; L-histidine biosynthesis; L-histidine from 5-phospho-alpha-D-ribose 1-diphosphate: step 5/9. IGPS catalyzes the conversion of PRFAR and glutamine to IGP, AICAR and glutamate. The HisF subunit catalyzes the cyclization activity that produces IGP and AICAR from PRFAR using the ammonia provided by the HisH subunit. The sequence is that of Imidazole glycerol phosphate synthase subunit HisF from Campylobacter lari (strain RM2100 / D67 / ATCC BAA-1060).